Reading from the N-terminus, the 295-residue chain is UDP-N-acetylenolpyruvoylglucosamine reductase (295 aa).

In terms of domain architecture, FAD-binding PCMH-type spans 24 to 188 (KVGGDAEIFF…LKAVFKVNKG (165 aa)). Arg168 is a catalytic residue. Ser217 (proton donor) is an active-site residue. Glu287 is an active-site residue.

It belongs to the MurB family. Requires FAD as cofactor.

The protein localises to the cytoplasm. It carries out the reaction UDP-N-acetyl-alpha-D-muramate + NADP(+) = UDP-N-acetyl-3-O-(1-carboxyvinyl)-alpha-D-glucosamine + NADPH + H(+). The protein operates within cell wall biogenesis; peptidoglycan biosynthesis. Cell wall formation. The protein is UDP-N-acetylenolpyruvoylglucosamine reductase of Rickettsia akari (strain Hartford).